The sequence spans 267 residues: uncharacterized protein (267 aa).

This is an uncharacterized protein from Saccharomyces cerevisiae (strain ATCC 204508 / S288c) (Baker's yeast).